The following is a 554-amino-acid chain: (E)-beta-caryophyllene synthase (554 aa).

Positions 313 and 317 each coordinate Mn(2+). The DDXXD motif motif lies at 313–317 (DDTYD). Homodimerization stretches follow at residues 319-325 (YGTLDEL) and 391-427 (EAQWFFSKYKPTMQEYMKVALLSSGYMMMTINSLAVI). The Mn(2+) site is built by D457 and E465.

This sequence belongs to the terpene synthase family. Homodimer. Mn(2+) is required as a cofactor. Requires Mg(2+) as cofactor. As to expression, expressed in peltate glandular trichomes. Present at low levels in flowers, leaves and stems.

The enzyme catalyses (2E,6E)-farnesyl diphosphate = (-)-(E)-beta-caryophyllene + diphosphate. The catalysed reaction is (2E,6E)-farnesyl diphosphate = alpha-humulene + diphosphate. It participates in secondary metabolite biosynthesis; terpenoid biosynthesis. Its function is as follows. Involved in the biosynthesis of phenolic sesquiterpenes natural products. Sesquiterpene synthase converting (2E,6E)-farnesyl diphosphate (FPP) to (E)-beta-caryophyllene and alpha-humulene. In Origanum vulgare (Wild marjoram), this protein is (E)-beta-caryophyllene synthase.